The primary structure comprises 144 residues: Nucleoside diphosphate kinase (144 aa).

The ATP site is built by Lys9, Phe57, Arg85, Thr91, Arg102, and Asn112. Residue His120 is the Pros-phosphohistidine intermediate of the active site.

It belongs to the NDK family. As to quaternary structure, homotetramer. It depends on Mg(2+) as a cofactor.

It is found in the cytoplasm. The catalysed reaction is a 2'-deoxyribonucleoside 5'-diphosphate + ATP = a 2'-deoxyribonucleoside 5'-triphosphate + ADP. It carries out the reaction a ribonucleoside 5'-diphosphate + ATP = a ribonucleoside 5'-triphosphate + ADP. Functionally, major role in the synthesis of nucleoside triphosphates other than ATP. The ATP gamma phosphate is transferred to the NDP beta phosphate via a ping-pong mechanism, using a phosphorylated active-site intermediate. This Streptococcus uberis (strain ATCC BAA-854 / 0140J) protein is Nucleoside diphosphate kinase.